The sequence spans 697 residues: Methionine--tRNA ligase (697 aa).

The 'HIGH' region motif lies at 11–21; that stretch reads PYANGPIHLGH. 4 residues coordinate Zn(2+): Cys-142, Cys-145, Cys-155, and Cys-158. The 'KMSKS' region motif lies at 343 to 347; sequence KMSKS. Lys-346 serves as a coordination point for ATP. One can recognise a tRNA-binding domain in the interval 595–697; the sequence is DFMKVEMTVA…DECKVGDKLA (103 aa).

It belongs to the class-I aminoacyl-tRNA synthetase family. MetG type 1 subfamily. In terms of assembly, homodimer. Zn(2+) serves as cofactor.

The protein resides in the cytoplasm. It carries out the reaction tRNA(Met) + L-methionine + ATP = L-methionyl-tRNA(Met) + AMP + diphosphate. Functionally, is required not only for elongation of protein synthesis but also for the initiation of all mRNA translation through initiator tRNA(fMet) aminoacylation. This Psychrobacter sp. (strain PRwf-1) protein is Methionine--tRNA ligase.